The primary structure comprises 446 residues: MNYVPNTVDQQEQILTRIGVGSLEELFADIPESVRRQAQLKIREGLSELELVKYMGRLAAENKTVEEYTSYLGAGAYEHFIPSYVDQLLLRSEFYTAYTPYQPEISQGTLQAIYEFQTLVCELTGMDGANASMYDGASALAEAALMSCDATRRKKVLVPQTIHPEYREVLRTYLLPRGVEILEIPYQEGAVDSEALEKALNTEVAAVLIQSPNFFGMIEKAVEIGQMAHAKGGLLVMAVNPVSLGLLKSPGELGADIVVGEGQPFGNPLNFGGPYLGFLACREKYVRRMPGRIVGATKDKNGKKGYVLTLQAREQHIRREKAASNICSNEALCALAFTIHLSGLGKRGLKEMARLNLQKAHYGAEEIGKLPGMSLAFQGPFFHEFVIKTEVSPRKINEALLSHKIIGGLELSRFYPELDQHLLFCVTETKTKEDIDRLVAGMGEIK.

The protein belongs to the GcvP family. N-terminal subunit subfamily. The glycine cleavage system is composed of four proteins: P, T, L and H. In this organism, the P 'protein' is a heterodimer of two subunits.

The enzyme catalyses N(6)-[(R)-lipoyl]-L-lysyl-[glycine-cleavage complex H protein] + glycine + H(+) = N(6)-[(R)-S(8)-aminomethyldihydrolipoyl]-L-lysyl-[glycine-cleavage complex H protein] + CO2. Functionally, the glycine cleavage system catalyzes the degradation of glycine. The P protein binds the alpha-amino group of glycine through its pyridoxal phosphate cofactor; CO(2) is released and the remaining methylamine moiety is then transferred to the lipoamide cofactor of the H protein. The chain is Probable glycine dehydrogenase (decarboxylating) subunit 1 from Desulfitobacterium hafniense (strain DSM 10664 / DCB-2).